The primary structure comprises 457 residues: tRNA (guanine(37)-N(1))-methyltransferase (457 aa).

S-adenosyl-L-methionine contacts are provided by residues His240, 278–279, 306–307, and Asn338; these read DL and DG.

It belongs to the class I-like SAM-binding methyltransferase superfamily. TRM5/TYW2 family. In terms of assembly, monomer.

The protein localises to the mitochondrion matrix. The protein resides in the nucleus. Its subcellular location is the cytoplasm. The enzyme catalyses guanosine(37) in tRNA + S-adenosyl-L-methionine = N(1)-methylguanosine(37) in tRNA + S-adenosyl-L-homocysteine + H(+). Its function is as follows. Specifically methylates the N1 position of guanosine-37 in various cytoplasmic and mitochondrial tRNAs. Methylation is not dependent on the nature of the nucleoside 5' of the target nucleoside. This is the first step in the biosynthesis of wybutosine (yW), a modified base adjacent to the anticodon of tRNAs and required for accurate decoding. The polypeptide is tRNA (guanine(37)-N(1))-methyltransferase (Drosophila melanogaster (Fruit fly)).